Reading from the N-terminus, the 352-residue chain is Pyrimidine monooxygenase RutA (352 aa).

FMN-binding positions include 49–50 (IK), asparagine 115, glutamate 124, 140–141 (RY), and serine 189.

Belongs to the NtaA/SnaA/DszA monooxygenase family. RutA subfamily.

It catalyses the reaction uracil + FMNH2 + NADH + O2 = (Z)-3-ureidoacrylate + FMN + NAD(+) + H2O + H(+). The catalysed reaction is thymine + FMNH2 + NADH + O2 = (Z)-2-methylureidoacrylate + FMN + NAD(+) + H2O + H(+). Functionally, catalyzes the pyrimidine ring opening between N-3 and C-4 by an unusual flavin hydroperoxide-catalyzed mechanism, adding oxygen atoms in the process to yield ureidoacrylate peracid, that immediately reacts with FMN forming ureidoacrylate and FMN-N(5)-oxide. The FMN-N(5)-oxide reacts spontaneously with NADH to produce FMN. Requires the flavin reductase RutF to regenerate FMN in vivo. This Caulobacter segnis (strain ATCC 21756 / DSM 7131 / JCM 7823 / NBRC 15250 / LMG 17158 / TK0059) (Mycoplana segnis) protein is Pyrimidine monooxygenase RutA.